The following is a 148-amino-acid chain: Augurin (148 aa).

A signal peptide spans M1–G31. 2 consecutive propeptides follow at residues N32–R70 and S133–Y148.

It belongs to the augurin family. In terms of tissue distribution, expressed in the intermediate lobe of pituitary, glomerular layer of adrenal cortex, choroid plexus and atrioventricular node of the heart. Expressed in the brain with high expression in the choroid plexus and the epithelial lining of the central canal and expression in the gray matter of the spinal cord (at protein level).

The protein localises to the secreted. It is found in the cytoplasm. It localises to the apical cell membrane. In terms of biological role, probable hormone that may attenuate cell proliferation and induce senescence of oligodendrocyte and neural precursor cells in the central nervous system. ECRG4-induced senescence is characterized by G1 arrest, RB1 dephosphorylation and accelerated CCND1 and CCND3 proteasomal degradation. The protein is Augurin of Mus musculus (Mouse).